The primary structure comprises 101 residues: Protein Tat (101 aa).

The tract at residues 1 to 24 (MEPVDPNREPWNHPGSQPKTACTN) is interaction with human CREBBP. Residues 1-48 (MEPVDPNREPWNHPGSQPKTACTNCYCKKCCYHCQVCFLQKGLGISYG) form a transactivation region. The Zn(2+) site is built by Cys-22, Cys-25, and Cys-27. The cysteine-rich stretch occupies residues 22–37 (CTNCYCKKCCYHCQVC). An N6-acetyllysine; by host PCAF modification is found at Lys-28. Residues Cys-30, His-33, Cys-34, and Cys-37 each coordinate Zn(2+). Residues 38 to 48 (FLQKGLGISYG) form a core region. The tract at residues 48–101 (GRKKRRQRRSAPPGSKNHQDLIPEQPLFQTQRKPTGPEESKKEVESKAEPDRFD) is disordered. The short motif at 49–57 (RKKRRQRRS) is the Nuclear localization signal, RNA-binding (TAR), and protein transduction element. The segment at 49–86 (RKKRRQRRSAPPGSKNHQDLIPEQPLFQTQRKPTGPEE) is interaction with the host capping enzyme RNGTT. N6-acetyllysine; by host EP300 and GCN5L2 occurs at positions 50 and 51. Arg-52 and Arg-53 each carry asymmetric dimethylarginine; by host PRMT6. The segment covering 82 to 101 (TGPEESKKEVESKAEPDRFD) has biased composition (basic and acidic residues).

Belongs to the lentiviruses Tat family. Interacts with host CCNT1. Associates with the P-TEFb complex composed at least of Tat, P-TEFb (CDK9 and CCNT1), TAR RNA, RNA Pol II. Recruits the HATs CREBBP, TAF1/TFIID, EP300, PCAF and GCN5L2. Interacts with host KAT5/Tip60; this interaction targets the latter to degradation. Interacts with the host deacetylase SIRT1. Interacts with host capping enzyme RNGTT; this interaction stimulates RNGTT. Binds to host KDR, and to the host integrins ITGAV/ITGB3 and ITGA5/ITGB1. Interacts with host KPNB1/importin beta-1 without previous binding to KPNA1/importin alpha-1. Interacts with EIF2AK2. Interacts with host nucleosome assembly protein NAP1L1; this interaction may be required for the transport of Tat within the nucleus, since the two proteins interact at the nuclear rim. Interacts with host C1QBP/SF2P32; this interaction involves lysine-acetylated Tat. Interacts with the host chemokine receptors CCR2, CCR3 and CXCR4. Interacts with host DPP4/CD26; this interaction may trigger an anti-proliferative effect. Interacts with host LDLR. Interacts with the host extracellular matrix metalloproteinase MMP1. Interacts with host PRMT6; this interaction mediates Tat's methylation. Interacts with, and is ubiquitinated by MDM2/Hdm2. Interacts with host PSMC3 and HTATIP2. Interacts with STAB1; this interaction may overcome SATB1-mediated repression of IL2 and IL2RA (interleukin) in T cells by binding to the same domain than HDAC1. Interacts (when acetylated) with human CDK13, thereby increasing HIV-1 mRNA splicing and promoting the production of the doubly spliced HIV-1 protein Nef. Interacts with host TBP; this interaction modulates the activity of transcriptional pre-initiation complex. Interacts with host RELA. Interacts with host PLSCR1; this interaction negatively regulates Tat transactivation activity by altering its subcellular distribution. In terms of processing, asymmetrical arginine methylation by host PRMT6 seems to diminish the transactivation capacity of Tat and affects the interaction with host CCNT1. Post-translationally, acetylation by EP300, CREBBP, GCN5L2/GCN5 and PCAF regulates the transactivation activity of Tat. EP300-mediated acetylation of Lys-50 promotes dissociation of Tat from the TAR RNA through the competitive binding to PCAF's bromodomain. In addition, the non-acetylated Tat's N-terminus can also interact with PCAF. PCAF-mediated acetylation of Lys-28 enhances Tat's binding to CCNT1. Lys-50 is deacetylated by SIRT1. Polyubiquitination by host MDM2 does not target Tat to degradation, but activates its transactivation function and fosters interaction with CCNT1 and TAR RNA. In terms of processing, phosphorylated by EIF2AK2 on serine and threonine residues adjacent to the basic region important for TAR RNA binding and function. Phosphorylation of Tat by EIF2AK2 is dependent on the prior activation of EIF2AK2 by dsRNA.

The protein resides in the host nucleus. The protein localises to the host nucleolus. It is found in the host cytoplasm. It localises to the secreted. In terms of biological role, transcriptional activator that increases RNA Pol II processivity, thereby increasing the level of full-length viral transcripts. Recognizes a hairpin structure at the 5'-LTR of the nascent viral mRNAs referred to as the transactivation responsive RNA element (TAR) and recruits the cyclin T1-CDK9 complex (P-TEFb complex) that will in turn hyperphosphorylate the RNA polymerase II to allow efficient elongation. The CDK9 component of P-TEFb and other Tat-activated kinases hyperphosphorylate the C-terminus of RNA Pol II that becomes stabilized and much more processive. Other factors such as HTATSF1/Tat-SF1, SUPT5H/SPT5, and HTATIP2 are also important for Tat's function. Besides its effect on RNA Pol II processivity, Tat induces chromatin remodeling of proviral genes by recruiting the histone acetyltransferases (HATs) CREBBP, EP300 and PCAF to the chromatin. This also contributes to the increase in proviral transcription rate, especially when the provirus integrates in transcriptionally silent region of the host genome. To ensure maximal activation of the LTR, Tat mediates nuclear translocation of NF-kappa-B by interacting with host RELA. Through its interaction with host TBP, Tat may also modulate transcription initiation. Tat can reactivate a latently infected cell by penetrating in it and transactivating its LTR promoter. In the cytoplasm, Tat is thought to act as a translational activator of HIV-1 mRNAs. Functionally, extracellular circulating Tat can be endocytosed by surrounding uninfected cells via the binding to several surface receptors such as CD26, CXCR4, heparan sulfate proteoglycans (HSPG) or LDLR. Neurons are rarely infected, but they internalize Tat via their LDLR. Through its interaction with nuclear HATs, Tat is potentially able to control the acetylation-dependent cellular gene expression. Modulates the expression of many cellular genes involved in cell survival, proliferation or in coding for cytokines or cytokine receptors. Tat plays a role in T-cell and neurons apoptosis. Tat induced neurotoxicity and apoptosis probably contribute to neuroAIDS. Circulating Tat also acts as a chemokine-like and/or growth factor-like molecule that binds to specific receptors on the surface of the cells, affecting many cellular pathways. In the vascular system, Tat binds to ITGAV/ITGB3 and ITGA5/ITGB1 integrins dimers at the surface of endothelial cells and competes with bFGF for heparin-binding sites, leading to an excess of soluble bFGF. The polypeptide is Protein Tat (Human immunodeficiency virus type 1 group M subtype J (isolate SE9173) (HIV-1)).